An 830-amino-acid polypeptide reads, in one-letter code: Prolactin receptor (830 aa).

Residues 1–23 (MKQKLRSSVQIILLFALTAVGLT) form the signal peptide. At 24 to 439 (GQSYPGKPKI…QIPTDFRIKD (416 aa)) the chain is on the extracellular side. 4 consecutive Fibronectin type-III domains span residues 30–128 (KPKI…VQPD), 129–228 (APVN…IPNG), 231–331 (PPEK…IVQT), and 333–434 (PPVN…IPTD). Cys-36 and Cys-46 are joined by a disulfide. The N-linked (GlcNAc...) asparagine glycan is linked to Asn-59. A disulfide bridge links Cys-75 with Cys-86. 8 N-linked (GlcNAc...) asparagine glycosylation sites follow: Asn-91, Asn-100, Asn-112, Asn-132, Asn-263, Asn-304, Asn-316, and Asn-336. Zn(2+) is bound by residues Asp-415 and His-417. The short motif at 420–424 (WSEWS) is the WSXWS motif element. The chain crosses the membrane as a helical span at residues 440–460 (MVVWIIVGVLSSLICLVMSWT). The Cytoplasmic segment spans residues 461-830 (MVLKGYRMIA…DPSSFIPAFK (370 aa)). The Box 1 motif motif lies at 472-480 (ILPPVPGPK).

This sequence belongs to the type I cytokine receptor family. Type 1 subfamily.

Its subcellular location is the membrane. Functionally, this is a receptor for the anterior pituitary hormone prolactin. The protein is Prolactin receptor (PRLR) of Columba livia (Rock dove).